A 245-amino-acid chain; its full sequence is 2,3-bisphosphoglycerate-dependent phosphoglycerate mutase (245 aa).

Substrate-binding positions include 8-15 (RHGQSLWN), 21-22 (TG), R60, 87-90 (ERHY), K98, 114-115 (RR), and 183-184 (GN). The active-site Tele-phosphohistidine intermediate is the H9. E87 functions as the Proton donor/acceptor in the catalytic mechanism.

Belongs to the phosphoglycerate mutase family. BPG-dependent PGAM subfamily.

The enzyme catalyses (2R)-2-phosphoglycerate = (2R)-3-phosphoglycerate. Its pathway is carbohydrate degradation; glycolysis; pyruvate from D-glyceraldehyde 3-phosphate: step 3/5. Catalyzes the interconversion of 2-phosphoglycerate and 3-phosphoglycerate. In Bacillus cereus (strain AH187), this protein is 2,3-bisphosphoglycerate-dependent phosphoglycerate mutase.